Here is a 144-residue protein sequence, read N- to C-terminus: Cysteine-rich tail protein 1 (144 aa).

Residues alanine 51 to proline 105 form a disordered region. The span at isoleucine 78–alanine 98 shows a compositional bias: polar residues.

It belongs to the CYSRT1 family. In terms of assembly, interacts with LCE1B; the interaction is direct. Interacts with LCE2C; the interaction is direct. Interacts with LCE3A; the interaction is direct. Interacts with LCE3C; the interaction is direct. Interacts with LCE4A; the interaction is direct. Interacts with LCE5A; the interaction is direct. Interacts with LCE1C. Interacts with LCE1D. Interacts with LCE1E. Interacts with LCE2A. Interacts with LCE3D. Interacts with LCE3E. Interacts with LCE1A. In terms of tissue distribution, expressed in the stratum granulosum, in skin and oral epithelia (at protein level).

It localises to the cornified envelope. Functionally, component of the stratum corneum that may contribute to epidermal antimicrobial host defenses. This chain is Cysteine-rich tail protein 1 (CYSRT1), found in Homo sapiens (Human).